Consider the following 290-residue polypeptide: GTPase Era (290 aa).

Residues K2 to E169 enclose the Era-type G domain. The G1 stretch occupies residues G10–S17. G10–S17 contacts GTP. Positions Q36 to N40 are G2. A G3 region spans residues D57–G60. Residues D57 to F61 and N119 to D122 contribute to the GTP site. Residues N119–D122 form a G4 region. The tract at residues I148–A150 is G5. The KH type-2 domain maps to L200–K276.

Belongs to the TRAFAC class TrmE-Era-EngA-EngB-Septin-like GTPase superfamily. Era GTPase family. Monomer.

It is found in the cytoplasm. Its subcellular location is the cell inner membrane. In terms of biological role, an essential GTPase that binds both GDP and GTP, with rapid nucleotide exchange. Plays a role in 16S rRNA processing and 30S ribosomal subunit biogenesis and possibly also in cell cycle regulation and energy metabolism. This chain is GTPase Era, found in Borrelia garinii subsp. bavariensis (strain ATCC BAA-2496 / DSM 23469 / PBi) (Borreliella bavariensis).